The following is an 83-amino-acid chain: Large ribosomal subunit protein eL43 (83 aa).

Residues C38, C41, C56, and C59 each contribute to the Zn(2+) site. Residues 38–59 (CKKCGKKAVKRSGTGIWECRHC) form a C4-type zinc finger.

Belongs to the eukaryotic ribosomal protein eL43 family. Putative zinc-binding subfamily. In terms of assembly, part of the 50S ribosomal subunit. Zn(2+) is required as a cofactor.

Binds to the 23S rRNA. This chain is Large ribosomal subunit protein eL43, found in Archaeoglobus fulgidus (strain ATCC 49558 / DSM 4304 / JCM 9628 / NBRC 100126 / VC-16).